Here is a 28-residue protein sequence, read N- to C-terminus: Conotoxin Cl6a (28 aa).

Cystine bridges form between Cys3–Cys13, Cys7–Cys19, and Cys12–Cys24.

In terms of tissue distribution, expressed by the venom duct.

The protein localises to the secreted. The chain is Conotoxin Cl6a from Californiconus californicus (California cone).